Reading from the N-terminus, the 80-residue chain is Defensin-like protein 2 (80 aa).

An N-terminal signal peptide occupies residues 1–29; sequence MAKFASIIVLLFVALVVFAAFEEPTMVEA. Gln30 is subject to Pyrrolidone carboxylic acid. Disulfide bonds link Cys33–Cys80, Cys44–Cys65, Cys50–Cys74, and Cys54–Cys76.

This sequence belongs to the DEFL family.

The protein resides in the secreted. Its function is as follows. Possesses antifungal activity sensitive to inorganic cations. Induces potential changes in fungal membranes and increased K(+) efflux and Ca(2+) uptake. The sequence is that of Defensin-like protein 2 (AFP2) from Raphanus sativus (Radish).